A 451-amino-acid chain; its full sequence is UDP-glycosyltransferase 76C4 (451 aa).

Residues serine 273, 332 to 334 (APQ), 349 to 357 (HNGWNSTVE), and 371 to 374 (RWDQ) each bind UDP-alpha-D-glucose.

Belongs to the UDP-glycosyltransferase family.

The chain is UDP-glycosyltransferase 76C4 (UGT76C4) from Arabidopsis thaliana (Mouse-ear cress).